Here is a 629-residue protein sequence, read N- to C-terminus: FAST kinase domain-containing protein 4 (629 aa).

Positions 559–617 constitute an RAP domain; sequence IAFLRWEFPNFNSRSKDLLGRFVLARRHVLAAGFLVVDVPYYEWLDLKSEWQKTAYLKD.

This sequence belongs to the FAST kinase family.

The protein localises to the mitochondrion matrix. Its function is as follows. Plays a role in processing of mitochondrial RNA precursors and in stabilization of a subset of mature mitochondrial RNA species, such as MT-CO1, MT-CO2, MT-CYB, MT-CO3, MT-ND3, MT-ND5 and MT-ATP8/6. May play a role in cell cycle progression. The polypeptide is FAST kinase domain-containing protein 4 (Tbrg4) (Rattus norvegicus (Rat)).